A 31-amino-acid polypeptide reads, in one-letter code: Photosystem II reaction center protein T (31 aa).

The chain crosses the membrane as a helical span at residues 3-23; that stretch reads ALVYTFLLVGTLGIIFFSIFF.

It belongs to the PsbT family. In terms of assembly, PSII is composed of 1 copy each of membrane proteins PsbA, PsbB, PsbC, PsbD, PsbE, PsbF, PsbH, PsbI, PsbJ, PsbK, PsbL, PsbM, PsbT, PsbY, PsbZ, Psb30/Ycf12, at least 3 peripheral proteins of the oxygen-evolving complex and a large number of cofactors. It forms dimeric complexes.

Its subcellular location is the plastid. The protein localises to the chloroplast thylakoid membrane. Its function is as follows. Found at the monomer-monomer interface of the photosystem II (PS II) dimer, plays a role in assembly and dimerization of PSII. PSII is a light-driven water plastoquinone oxidoreductase, using light energy to abstract electrons from H(2)O, generating a proton gradient subsequently used for ATP formation. The protein is Photosystem II reaction center protein T of Bigelowiella natans (Pedinomonas minutissima).